Here is a 323-residue protein sequence, read N- to C-terminus: MNGDELPFESGFEVYAKGTHKSEFDSNLLDPRSDPIWDAIREEAKLEAEKEPILSSFLYAGILAHDCLEQALGFVLANRLQNPTLLATQLLDIFYGVMMHDKGIQSSIRHDLQAFKDRDPACLSYSSAILHLKGYHALQAYRVAHKLWNEGRKLLALALQSRISEVFGIDIHPAARIGEGILLDHGTGVVIGETAVIGNGVSILHGVTLGGTGKETGDRHPKIGEGALLGACVTILGNISIGAGAMVAAGSLVLKDVPSHSVVAGNPAKLIRVMEEQDPSLAMKHDATKEFFRHVADGYKGAQSNGPSLSAGDTEKGHTNSTS.

The interval 302 to 323 is disordered; that stretch reads AQSNGPSLSAGDTEKGHTNSTS. Positions 313–323 are enriched in basic and acidic residues; the sequence is DTEKGHTNSTS.

The protein belongs to the transferase hexapeptide repeat family. Homomultimer. As to expression, ubiquitously expressed at low levels. Localized in vascular tissues, particularly in phloem.

It localises to the cytoplasm. The catalysed reaction is L-serine + acetyl-CoA = O-acetyl-L-serine + CoA. The protein operates within amino-acid biosynthesis; L-cysteine biosynthesis; L-cysteine from L-serine: step 1/2. The polypeptide is Serine acetyltransferase 2 (Arabidopsis thaliana (Mouse-ear cress)).